Consider the following 606-residue polypeptide: NADH-ubiquinone oxidoreductase chain 5 (606 aa).

The next 16 helical transmembrane spans lie at 1 to 21 (MNIF…PIIA), 38 to 58 (NIIS…IYSG), 87 to 107 (MIFV…SIWY), 114 to 134 (ITQF…LVTA), 140 to 160 (LFIG…WWYG), 171 to 191 (AILY…WFLS), 213 to 233 (LMGL…HPWL), 241 to 261 (TPVS…FLLI), 273 to 293 (AQTL…ICAL), 301 to 320 (IIAF…IGIN), 325 to 347 (AFLH…GSII), 366 to 386 (MPFT…MPFL), 409 to 429 (LLMT…MIFF), 457 to 477 (LLIG…PTTT), 488 to 508 (LMAL…SLAT), and 582 to 602 (GLIK…LLLL).

The protein belongs to the complex I subunit 5 family. Core subunit of respiratory chain NADH dehydrogenase (Complex I) which is composed of 45 different subunits.

The protein localises to the mitochondrion inner membrane. It carries out the reaction a ubiquinone + NADH + 5 H(+)(in) = a ubiquinol + NAD(+) + 4 H(+)(out). Its function is as follows. Core subunit of the mitochondrial membrane respiratory chain NADH dehydrogenase (Complex I) which catalyzes electron transfer from NADH through the respiratory chain, using ubiquinone as an electron acceptor. Essential for the catalytic activity and assembly of complex I. The polypeptide is NADH-ubiquinone oxidoreductase chain 5 (MT-ND5) (Rhinoceros unicornis (Greater Indian rhinoceros)).